A 913-amino-acid chain; its full sequence is Valine--tRNA ligase (913 aa).

The short motif at 48-58 is the 'HIGH' region element; that stretch reads PNVTGSLHMGH. The 'KMSKS' region signature appears at 541-545; sequence KMSKS. Position 544 (Lys544) interacts with ATP. Residues 839–907 adopt a coiled-coil conformation; the sequence is VVDLEALVSK…IEHRLQSLGV (69 aa).

It belongs to the class-I aminoacyl-tRNA synthetase family. ValS type 1 subfamily. As to quaternary structure, monomer.

Its subcellular location is the cytoplasm. The catalysed reaction is tRNA(Val) + L-valine + ATP = L-valyl-tRNA(Val) + AMP + diphosphate. Functionally, catalyzes the attachment of valine to tRNA(Val). As ValRS can inadvertently accommodate and process structurally similar amino acids such as threonine, to avoid such errors, it has a 'posttransfer' editing activity that hydrolyzes mischarged Thr-tRNA(Val) in a tRNA-dependent manner. The chain is Valine--tRNA ligase from Thermosynechococcus vestitus (strain NIES-2133 / IAM M-273 / BP-1).